A 358-amino-acid chain; its full sequence is Nuclease EXOG, mitochondrial (358 aa).

Catalysis depends on H132, which acts as the Proton acceptor. N163 lines the a divalent metal cation pocket.

This sequence belongs to the DNA/RNA non-specific endonuclease family. Homodimer. The cofactor is a divalent metal cation.

The protein localises to the mitochondrion inner membrane. Its function is as follows. Endo/exonuclease with nicking activity towards supercoiled DNA, a preference for single-stranded DNA and 5'-3' exonuclease activity. This is Nuclease EXOG, mitochondrial (exog) from Xenopus laevis (African clawed frog).